Consider the following 512-residue polypeptide: Pantothenate transporter FEN2 (512 aa).

Residues 1-27 (MMKESKSITQHEVERESVSSKRAIKKR) are Cytoplasmic-facing. Residues 28-48 (LLLFKIDLFVLSFVCLQYWIN) traverse the membrane as a helical segment. Residues 49–79 (YVDRVGFTNAYISGMKEDLKMVGNDLTVSNT) are Extracellular-facing. Residues 80–100 (VFMIGYIVGMVPNNLMLLCVP) form a helical membrane-spanning segment. Over 101-102 (PR) the chain is Cytoplasmic. The chain crosses the membrane as a helical span at residues 103-123 (IWLSFCTFAWGLLTLGMYKVT). Topologically, residues 124-132 (SFKHICAIR) are extracellular. Residues 133–153 (FFQALFESCTFSGTHFVLGSW) form a helical membrane-spanning segment. Over 154–164 (YKEDELPIRSA) the chain is Cytoplasmic. Residues 165 to 185 (IFTGSGLVGSMFSGFMQTSIF) form a helical membrane-spanning segment. The Extracellular portion of the chain corresponds to 186-198 (THLNGRNGLAGWR). A helical membrane pass occupies residues 199-219 (WLFIIDFCITLPIAIYGFIFF). Residues 220 to 271 (PGLPDQTSAVSKFSMTRYIFNEQELHYARRRLPARDESTRLDWSTIPRVLKR) lie on the Cytoplasmic side of the membrane. A helical transmembrane segment spans residues 272-292 (WHWWMFSLVWVLGGENLGFAS). The Extracellular segment spans residues 293–312 (NSTFALWLQNQKYTLAQRNN). Residues 313–333 (YPSGIFAVGIVSTLCSAVYMS) traverse the membrane as a helical segment. At 334–342 (KIPRARHWH) the chain is on the cytoplasmic side. The helical transmembrane segment at 343-363 (VSVFISLVMVIVAVLIRADPL) threads the bilayer. Topologically, residues 364–372 (NPKVVFSAQ) are extracellular. The chain crosses the membrane as a helical span at residues 373–393 (YLGGVAYAGQAVFFSWANIIC). At 394 to 401 (HADLQERA) the chain is on the cytoplasmic side. A helical transmembrane segment spans residues 402–422 (IVLASMNMFSGAVNAWWSILF). Residues 423–434 (FASDMVPKFERG) lie on the Extracellular side of the membrane. The chain crosses the membrane as a helical span at residues 435–455 (CYALLATAISSGIVSVVIRSL). The Cytoplasmic portion of the chain corresponds to 456–512 (QIKENLSKKQVPYIDANDMPGEDDDDDNQDNENDGDDESMEVELHNEEMAEISNPFR). The disordered stretch occupies residues 468-512 (YIDANDMPGEDDDDDNQDNENDGDDESMEVELHNEEMAEISNPFR). Over residues 475-496 (PGEDDDDDNQDNENDGDDESME) the composition is skewed to acidic residues.

It belongs to the major facilitator superfamily. Allantoate permease family.

The protein resides in the cell membrane. In terms of biological role, transports pantothenate into the cell. Also involved in the catabolite repression-mediated regulation of ergosterol biosynthesis and in fenpropimorph resistance. This chain is Pantothenate transporter FEN2 (FEN2), found in Saccharomyces cerevisiae (strain ATCC 204508 / S288c) (Baker's yeast).